The primary structure comprises 557 residues: Organic cation/carnitine transporter 2 (557 aa).

Topologically, residues 1-20 (MRDYDEVTAFLGEWGPFQRL) are cytoplasmic. A helical transmembrane segment spans residues 21 to 41 (IFFLLSASIIPNGFTGLSSVF). Residues 42 to 142 (LIATPEHRCR…NLVCEDDWKA (101 aa)) lie on the Extracellular side of the membrane. Asparagine 57, asparagine 64, and asparagine 91 each carry an N-linked (GlcNAc...) asparagine glycan. The chain crosses the membrane as a helical span at residues 143–163 (PLTISLFFVGVLLGSFISGQL). The Cytoplasmic portion of the chain corresponds to 164-172 (SDRFGRKNV). The helical transmembrane segment at 173-193 (LFVTMGMQTGFSFLQIFSKNF) threads the bilayer. Topologically, residues 194-197 (EMFV) are extracellular. Residues 198-218 (VLFVLVGMGQISNYVAAFVLG) traverse the membrane as a helical segment. Residue 218–225 (GTEILGKS) participates in ATP binding. Topologically, residues 219 to 232 (TEILGKSVRIIFST) are cytoplasmic. The chain crosses the membrane as a helical span at residues 233–253 (LGVCIFYAFGYMVLPLFAYFI). The Extracellular portion of the chain corresponds to 254-257 (RDWR). The helical transmembrane segment at 258 to 278 (MLLVALTMPGVLCVALWWFIP) threads the bilayer. Residues 279–341 (ESPRWLISQG…LDLLRTWNIR (63 aa)) are Cytoplasmic-facing. Residues 342 to 362 (MVTIMSIMLWMTISVGYFGLS) form a helical membrane-spanning segment. Topologically, residues 363 to 373 (LDTPNLHGDIF) are extracellular. A helical transmembrane segment spans residues 374-394 (VNCFLSAMVEVPAYVLAWLLL). The Cytoplasmic segment spans residues 395-406 (QYLPRRYSMATA). A helical transmembrane segment spans residues 407-427 (LFLGGSVLLFMQLVPPDLYYL). The Extracellular segment spans residues 428 to 430 (ATV). The helical transmembrane segment at 431–451 (LVMVGKFGVTAAFSMVYVYTA) threads the bilayer. Over 452–462 (ELYPTVVRNMG) the chain is Cytoplasmic. A helical transmembrane segment spans residues 463–483 (VGVSSTASRLGSILSPYFVYL). Residues 484-488 (GAYDR) are Extracellular-facing. A Phosphotyrosine modification is found at tyrosine 486. The chain crosses the membrane as a helical span at residues 489-509 (FLPYILMGSLTILTAILTLFL). The interval 535 to 557 (TPSHTRMLKDGQERPTILKSTAF) is disordered. At threonine 550 the chain carries Phosphothreonine.

The protein belongs to the major facilitator (TC 2.A.1) superfamily. Organic cation transporter (TC 2.A.1.19) family. In terms of assembly, interacts with PDZK1. In terms of processing, glycosylated. Glycosylation affects the expression levels. Not glycosylated. As to expression, strongly expressed in kidney, skeletal muscle, heart and placenta. Primarily expressed by surface epithelial cells of the colon (at protein level). Expressed in CD68 macrophage and CD43 T-cells but not in CD20 B-cells. In testis, localized to Sertoli cell basal membranes, peritubular myoid cells and Leydig cells.

The protein localises to the cell membrane. The protein resides in the apical cell membrane. Its subcellular location is the basal cell membrane. It is found in the endoplasmic reticulum. The catalysed reaction is (R)-carnitine(out) + Na(+)(out) = (R)-carnitine(in) + Na(+)(in). It carries out the reaction glycine betaine(out) + Na(+)(out) = glycine betaine(in) + Na(+)(in). It catalyses the reaction glycine betaine(out) + (R)-carnitine(in) = glycine betaine(in) + (R)-carnitine(out). The enzyme catalyses O-butanoyl-(R)-carnitine(out) + Na(+)(out) = O-butanoyl-(R)-carnitine(in) + Na(+)(in). The catalysed reaction is O-acetyl-(R)-carnitine(out) + Na(+)(out) = O-acetyl-(R)-carnitine(in) + Na(+)(in). It carries out the reaction O-propanoyl-(R)-carnitine(out) + Na(+)(out) = O-propanoyl-(R)-carnitine(in) + Na(+)(in). It catalyses the reaction (S)-carnitine(out) + Na(+)(out) = (S)-carnitine(in) + Na(+)(in). The enzyme catalyses an O-acyl-(R)-carnitine(out) + Na(+)(out) = an O-acyl-(R)-carnitine(in) + Na(+)(in). The catalysed reaction is L-glutamyl-L-arginyl-glycyl-L-methionyl-L-threonine(out) + Na(+)(out) = L-glutamyl-L-arginyl-glycyl-L-methionyl-L-threonine(in) + Na(+)(in). It carries out the reaction N,N-dimethylglycine(out) + Na(+)(out) = N,N-dimethylglycine(in) + Na(+)(in). Its activity is regulated as follows. Inhibited by emetine, quinidine and verapamil. The IC(50) of emetine is 4.2 uM. Not inhibited by valproic acid. Transport of (R)-carnitine is stimulated by cholesterol in the plasma membrane. Its function is as follows. Sodium-ion dependent, high affinity carnitine transporter. Involved in the active cellular uptake of carnitine. Transports one sodium ion with one molecule of carnitine. Also transports organic cations such as tetraethylammonium (TEA) without the involvement of sodium. Relative uptake activity ratio of carnitine to TEA is 11.3. In intestinal epithelia, transports the quorum-sensing pentapeptide CSF (competence and sporulation factor) from B.subtilis which induces cytoprotective heat shock proteins contributing to intestinal homeostasis. May also contribute to regulate the transport of organic compounds in testis across the blood-testis-barrier. In terms of biological role, retained in the ER, unable to perform carnitine uptake. This Homo sapiens (Human) protein is Organic cation/carnitine transporter 2.